We begin with the raw amino-acid sequence, 327 residues long: GMP reductase (327 aa).

Catalysis depends on C176, which acts as the Thioimidate intermediate. Position 205 to 228 (205 to 228 (IIADGGIRTHGDIAKSIRFGASMV)) interacts with NADP(+).

Belongs to the IMPDH/GMPR family. GuaC type 2 subfamily.

It catalyses the reaction IMP + NH4(+) + NADP(+) = GMP + NADPH + 2 H(+). Functionally, catalyzes the irreversible NADPH-dependent deamination of GMP to IMP. It functions in the conversion of nucleobase, nucleoside and nucleotide derivatives of G to A nucleotides, and in maintaining the intracellular balance of A and G nucleotides. The polypeptide is GMP reductase (Streptococcus pyogenes serotype M1).